The chain runs to 380 residues: Tryptophan 2,3-dioxygenase (380 aa).

Substrate-binding positions include 57 to 61 (FIITH) and Arg128. His313 provides a ligand contact to heme. Residue Thr328 coordinates substrate.

It belongs to the tryptophan 2,3-dioxygenase family. As to quaternary structure, homotetramer. Dimer of dimers. It depends on heme as a cofactor.

The enzyme catalyses L-tryptophan + O2 = N-formyl-L-kynurenine. It functions in the pathway amino-acid degradation; L-tryptophan degradation via kynurenine pathway; L-kynurenine from L-tryptophan: step 1/2. Its pathway is pigment biosynthesis; ommochrome biosynthesis. Heme-dependent dioxygenase that catalyzes the oxidative cleavage of the L-tryptophan (L-Trp) pyrrole ring and converts L-tryptophan to N-formyl-L-kynurenine. Catalyzes the oxidative cleavage of the indole moiety. This Drosophila willistoni (Fruit fly) protein is Tryptophan 2,3-dioxygenase.